Reading from the N-terminus, the 128-residue chain is Deoxycytidylate deaminase (128 aa).

The region spanning 5–128 (DWDEYFLGIA…IERVVYPKES (124 aa)) is the CMP/dCMP-type deaminase domain. His-81 serves as a coordination point for Zn(2+). Residue Glu-83 is the Proton donor of the active site. 2 residues coordinate Zn(2+): Cys-107 and Cys-110.

Belongs to the cytidine and deoxycytidylate deaminase family.

The enzyme catalyses dCMP + H2O + H(+) = dUMP + NH4(+). The polypeptide is Deoxycytidylate deaminase (36.1) (Mycobacterium (Mycobacteriophage D29)).